The following is a 414-amino-acid chain: Heterogeneous nuclear ribonucleoprotein F (414 aa).

Methionine 1 carries the post-translational modification N-acetylmethionine. Methionine 2 carries the post-translational modification N-acetylmethionine; in Heterogeneous nuclear ribonucleoprotein F, N-terminally processed. The RRM 1 domain maps to 11-90; sequence FVVKLRGLPW…RYIEVFKSHR (80 aa). Lysine 72 participates in a covalent cross-link: Glycyl lysine isopeptide (Lys-Gly) (interchain with G-Cter in SUMO). Positions 81-86 are interaction with RNA; the sequence is RYIEVF. Lysine 87 participates in a covalent cross-link: Glycyl lysine isopeptide (Lys-Gly) (interchain with G-Cter in SUMO2). A phosphoserine mark is found at serine 104 and serine 161. The RRM 2 domain occupies 111-188; sequence GFVRLRGLPF…RYIEVFKSSQ (78 aa). Lysine 167 participates in a covalent cross-link: Glycyl lysine isopeptide (Lys-Gly) (interchain with G-Cter in SUMO2). Positions 179 to 184 are interaction with RNA; that stretch reads RYIEVF. Lysine 185 participates in a covalent cross-link: Glycyl lysine isopeptide (Lys-Gly) (interchain with G-Cter in SUMO2). A phosphoserine mark is found at serine 187, serine 193, and serine 195. Residue lysine 200 is modified to N6-acetyllysine; alternate. A Glycyl lysine isopeptide (Lys-Gly) (interchain with G-Cter in SUMO2); alternate cross-link involves residue lysine 200. Threonine 215 is modified (phosphothreonine). Lysine 224 is modified (N6-acetyllysine; alternate). A Glycyl lysine isopeptide (Lys-Gly) (interchain with G-Cter in SUMO2); alternate cross-link involves residue lysine 224. Serine 265 carries the post-translational modification Phosphoserine. In terms of domain architecture, RRM 3 spans 289-366; it reads HCVHMRGLPY…IELFLNSTTG (78 aa). The interval 355–360 is interaction with RNA; that stretch reads RYIELF.

As to quaternary structure, identified in the spliceosome C complex. Interacts with AGO1, AGO2, TBP and TXNL4/DIM1. In terms of processing, sumoylated.

It localises to the nucleus. Its subcellular location is the nucleoplasm. Its function is as follows. Component of the heterogeneous nuclear ribonucleoprotein (hnRNP) complexes which provide the substrate for the processing events that pre-mRNAs undergo before becoming functional, translatable mRNAs in the cytoplasm. Plays a role in the regulation of alternative splicing events. Binds G-rich sequences in pre-mRNAs and keeps target RNA in an unfolded state. This chain is Heterogeneous nuclear ribonucleoprotein F (HNRNPF), found in Bos taurus (Bovine).